A 39-amino-acid polypeptide reads, in one-letter code: Photosystem II reaction center protein L (39 aa).

A helical transmembrane segment spans residues 18 to 38 (SLYLGLLIVFTTGILFSSYFF).

It belongs to the PsbL family. As to quaternary structure, PSII is composed of 1 copy each of membrane proteins PsbA, PsbB, PsbC, PsbD, PsbE, PsbF, PsbH, PsbI, PsbJ, PsbK, PsbL, PsbM, PsbT, PsbX, PsbY, PsbZ, Psb30/Ycf12, peripheral proteins PsbO, CyanoQ (PsbQ), PsbU, PsbV and a large number of cofactors. It forms dimeric complexes.

The protein resides in the cellular thylakoid membrane. In terms of biological role, one of the components of the core complex of photosystem II (PSII). PSII is a light-driven water:plastoquinone oxidoreductase that uses light energy to abstract electrons from H(2)O, generating O(2) and a proton gradient subsequently used for ATP formation. It consists of a core antenna complex that captures photons, and an electron transfer chain that converts photonic excitation into a charge separation. This subunit is found at the monomer-monomer interface and is required for correct PSII assembly and/or dimerization. This chain is Photosystem II reaction center protein L, found in Synechococcus sp. (strain CC9311).